The chain runs to 306 residues: Small ribosomal subunit protein uS2 (306 aa).

A disordered region spans residues 257–306; the sequence is EGDKKDETAAAAEVQTSAETEKVADAEKPAEAVAEAEAEAPAADADAEQA. The span at 275–286 shows a compositional bias: basic and acidic residues; the sequence is ETEKVADAEKPA. Low complexity predominate over residues 287 to 300; the sequence is EAVAEAEAEAPAAD.

Belongs to the universal ribosomal protein uS2 family.

In Streptomyces griseus subsp. griseus (strain JCM 4626 / CBS 651.72 / NBRC 13350 / KCC S-0626 / ISP 5235), this protein is Small ribosomal subunit protein uS2.